Consider the following 158-residue polypeptide: Transcription elongation factor GreA (158 aa).

A coiled-coil region spans residues 47–74 (AEYHAAKEEQSHNEGRIAELEDKLARAD).

The protein belongs to the GreA/GreB family.

Its function is as follows. Necessary for efficient RNA polymerase transcription elongation past template-encoded arresting sites. The arresting sites in DNA have the property of trapping a certain fraction of elongating RNA polymerases that pass through, resulting in locked ternary complexes. Cleavage of the nascent transcript by cleavage factors such as GreA or GreB allows the resumption of elongation from the new 3'terminus. GreA releases sequences of 2 to 3 nucleotides. The chain is Transcription elongation factor GreA from Bradyrhizobium sp. (strain BTAi1 / ATCC BAA-1182).